The following is a 229-amino-acid chain: tRNA pseudouridine synthase B (229 aa).

The Nucleophile role is filled by Asp-42.

It belongs to the pseudouridine synthase TruB family. Type 1 subfamily.

The enzyme catalyses uridine(55) in tRNA = pseudouridine(55) in tRNA. Functionally, responsible for synthesis of pseudouridine from uracil-55 in the psi GC loop of transfer RNAs. This is tRNA pseudouridine synthase B from Ureaplasma urealyticum serovar 10 (strain ATCC 33699 / Western).